We begin with the raw amino-acid sequence, 510 residues long: ATP synthase subunit alpha (510 aa).

Gly169 to Thr176 is a binding site for ATP.

It belongs to the ATPase alpha/beta chains family. F-type ATPases have 2 components, CF(1) - the catalytic core - and CF(0) - the membrane proton channel. CF(1) has five subunits: alpha(3), beta(3), gamma(1), delta(1), epsilon(1). CF(0) has three main subunits: a(1), b(2) and c(9-12). The alpha and beta chains form an alternating ring which encloses part of the gamma chain. CF(1) is attached to CF(0) by a central stalk formed by the gamma and epsilon chains, while a peripheral stalk is formed by the delta and b chains.

It is found in the cell inner membrane. The enzyme catalyses ATP + H2O + 4 H(+)(in) = ADP + phosphate + 5 H(+)(out). In terms of biological role, produces ATP from ADP in the presence of a proton gradient across the membrane. The alpha chain is a regulatory subunit. The chain is ATP synthase subunit alpha from Rickettsia peacockii (strain Rustic).